Here is a 486-residue protein sequence, read N- to C-terminus: MTTKKVRVRFCPSPTGTPHVGLVRTALFNWAYARHTGGDFVFRIEDTDAARDSDESYAAILDALRWLGMDWDEGPEVGGPYEPYRQSQRREIYRDVVARLLEAGEVYEAYSTPEEVEARHLAAGRNPKLGYDNYDRDLTDAQRKAFADEGRRPVLRLRMPDEDLSWNDLVRGPTTFAAGSVPDFAITRSNGDPLYTLVNPVDDALMKITHVLRGEDILPSTPRQIALYRALMRIGVAEFVPEFAHLPSVLGEGNKKLSKRDPQSNLFLHRDRGFIPEGLLNYLALLGWGIADDHDVFSLDEMVAAFDVADVNSNPARFDQKKADAINAEHIRMLAPEDFTARLREYFVTHGYDTTLDDAAFAEAAALVQTRVVVLGDAWGLLKFFNDDAYEIDEKSAAKELKPESAAVLDAALSALEAVGDWTTPAIEAALKTALLEGLELKPRKAFGPIRVAVTGAAVSPPLFESMELLGRDRSLARLRAARDRV.

Residues 12 to 22 (PSPTGTPHVGL) carry the 'HIGH' region motif. A 'KMSKS' region motif is present at residues 256–260 (KLSKR). Lys259 contacts ATP.

This sequence belongs to the class-I aminoacyl-tRNA synthetase family. Glutamate--tRNA ligase type 1 subfamily. Monomer.

It localises to the cytoplasm. The enzyme catalyses tRNA(Glu) + L-glutamate + ATP = L-glutamyl-tRNA(Glu) + AMP + diphosphate. In terms of biological role, catalyzes the attachment of glutamate to tRNA(Glu) in a two-step reaction: glutamate is first activated by ATP to form Glu-AMP and then transferred to the acceptor end of tRNA(Glu). The chain is Glutamate--tRNA ligase from Mycolicibacterium smegmatis (strain ATCC 700084 / mc(2)155) (Mycobacterium smegmatis).